The following is a 445-amino-acid chain: Putative H/ACA ribonucleoprotein complex subunit 4 (445 aa).

The segment at 1–32 is disordered; sequence MGKKDKRSKLEGDELAEAQQKGSFQLPSSNET. Polar residues predominate over residues 20 to 32; it reads QKGSFQLPSSNET. Aspartate 113 functions as the Nucleophile in the catalytic mechanism. Residues 284-359 form the PUA domain; that stretch reads HKRVVVKDSC…IVAKSKRVIM (76 aa). Positions 407-445 are disordered; the sequence is TDKVKKEQEDKEDEEEEEAPKKKSKKAAKKEVSSSSDSE.

It belongs to the pseudouridine synthase TruB family. In terms of assembly, component of the small nucleolar ribonucleoprotein particle containing H/ACA-type snoRNAs (H/ACA snoRNPs).

It is found in the nucleus. It localises to the nucleolus. It carries out the reaction a uridine in RNA = a pseudouridine in RNA. In terms of biological role, plays a central role in ribosomal RNA processing. Probable catalytic subunit of H/ACA small nucleolar ribonucleoprotein (H/ACA snoRNP) complex, which catalyzes pseudouridylation of rRNA. This involves the isomerization of uridine such that the ribose is subsequently attached to C5, instead of the normal N1. Pseudouridine ('psi') residues may serve to stabilize the conformation of rRNAs. The sequence is that of Putative H/ACA ribonucleoprotein complex subunit 4 from Caenorhabditis briggsae.